A 218-amino-acid polypeptide reads, in one-letter code: Small ribosomal subunit protein uS3 (218 aa).

The region spanning 38 to 106 (IREYINKRLQ…REHINIVEIK (69 aa)) is the KH type-2 domain.

The protein belongs to the universal ribosomal protein uS3 family. As to quaternary structure, part of the 30S ribosomal subunit. Forms a tight complex with proteins S10 and S14.

Its function is as follows. Binds the lower part of the 30S subunit head. Binds mRNA in the 70S ribosome, positioning it for translation. In Geobacillus stearothermophilus (Bacillus stearothermophilus), this protein is Small ribosomal subunit protein uS3.